A 440-amino-acid chain; its full sequence is 2-methylisoborneol synthase (440 aa).

The segment at 1–116 is disordered; sequence MPDSGPLGPH…SPAPAEPAAG (116 aa). The segment covering 17–27 has biased composition (low complexity); sequence TPATTVPDAPA. Pro residues predominate over residues 48–58; the sequence is PPVPIPSPSPP. The segment covering 59-75 has biased composition (low complexity); sequence SGSASAAADTPDATTVG. The span at 102-111 shows a compositional bias: pro residues; it reads PSLPGSPAPA. 6 residues coordinate Mg(2+): D197, D198, E202, N345, S349, and E353.

The protein belongs to the terpene synthase family. 2-methylisoborneol synthase subfamily. It depends on Mg(2+) as a cofactor.

The catalysed reaction is (E)-2-methylgeranyl diphosphate + H2O = 2-methylisoborneol + diphosphate. Catalyzes the cyclization of 2-methylgeranyl diphosphate (2-MeGPP) to 2-methylisoborneol (2-MIB), which likely involves the intermediacy of 2-methyllinalyl diphosphate. The sequence is that of 2-methylisoborneol synthase from Streptomyces ambofaciens (strain ATCC 23877 / 3486 / DSM 40053 / JCM 4204 / NBRC 12836 / NRRL B-2516).